A 143-amino-acid polypeptide reads, in one-letter code: Large ribosomal subunit protein uL11 (143 aa).

The protein belongs to the universal ribosomal protein uL11 family. In terms of assembly, part of the ribosomal stalk of the 50S ribosomal subunit. Interacts with L10 and the large rRNA to form the base of the stalk. L10 forms an elongated spine to which L12 dimers bind in a sequential fashion forming a multimeric L10(L12)X complex. One or more lysine residues are methylated.

Functionally, forms part of the ribosomal stalk which helps the ribosome interact with GTP-bound translation factors. This is Large ribosomal subunit protein uL11 from Chromobacterium violaceum (strain ATCC 12472 / DSM 30191 / JCM 1249 / CCUG 213 / NBRC 12614 / NCIMB 9131 / NCTC 9757 / MK).